The chain runs to 453 residues: Dibenzothiophene-sulfone monooxygenase (453 aa).

Residues D59, T106, H156, Y160, and S231 each contribute to the FMN site.

The protein belongs to the NtaA/SnaA/DszA monooxygenase family. In terms of assembly, homodimer.

The protein resides in the cytoplasm. It carries out the reaction dibenzothiophene 5,5-dioxide + FMNH2 + NADH + O2 = 2'-hydroxybiphenyl-2-sulfinate + FMN + NAD(+) + H2O + H(+). The protein operates within sulfur metabolism; dibenzothiophene degradation. Its function is as follows. Catalyzes the second step of the '4S' desulfurization pathway that removes covalently bound sulfur from dibenzothiophene (DBT) without breaking carbon-carbon bonds. Metabolizes DBT-sulfone (DBTO2 or DBT 5,5-dioxide) to 2-(2'-hydroxyphenyl)benzene sulphinate (HBPS). The polypeptide is Dibenzothiophene-sulfone monooxygenase (Rhodococcus erythropolis (Arthrobacter picolinophilus)).